Consider the following 2530-residue polypeptide: Agglutinin-like protein 2 (2530 aa).

An N-terminal signal peptide occupies residues 1 to 17 (MLLQFLLLSLCVSVATA). 4 disulfide bridges follow: C73-C150, C96-C112, C205-C297, and C227-C256. N253 and N315 each carry an N-linked (GlcNAc...) asparagine glycan. ALS repeat units follow at residues 364 to 395 (TTIT…VDVP), 400 to 431 (TTVT…VQVP), 437 to 468 (VTTT…IREP), 473 to 504 (VTTT…IREP), 509 to 540 (VTTT…IREP), and 545 to 576 (VTTT…IREP). An N-linked (GlcNAc...) asparagine glycan is attached at N578. The ALS 7 repeat unit spans residues 581 to 612 (VTTTEYWSQSYVTTSTITAPPGGTDTVIIREP). N614 carries N-linked (GlcNAc...) asparagine glycosylation. ALS repeat units lie at residues 617–648 (VTTT…IREP), 653–684 (VTTT…IREP), 689–720 (VTTT…IREP), 725–756 (VTTT…IREP), 761–792 (VTTT…IREP), 797–828 (VTTT…IREP), and 833–864 (VTTT…IREP). N-linked (GlcNAc...) asparagine glycosylation is present at N866. 4 ALS repeats span residues 869 to 900 (VTTT…IREP), 905 to 936 (VTTT…IREP), 941 to 972 (VTTT…IREP), and 977 to 1008 (VTTT…IREP). Residues 954-967 (TTTVTGPPGGTDTV) are compositionally biased toward low complexity. The disordered stretch occupies residues 954–975 (TTTVTGPPGGTDTVIIREPPNP). N1010 carries N-linked (GlcNAc...) asparagine glycosylation. 4 ALS repeats span residues 1013–1044 (VTTT…IREP), 1049–1077 (VTTT…TVII), 1085–1116 (VTTT…IREP), and 1121–1152 (VTTT…IREP). N-linked (GlcNAc...) asparagine glycosylation occurs at N1154. 6 ALS repeats span residues 1157-1188 (VTTT…IREP), 1193-1224 (VTTT…IREP), 1229-1260 (VTTT…IREP), 1265-1296 (VTTT…IREP), 1301-1332 (VTTT…IREP), and 1337-1368 (VTTT…IREP). N-linked (GlcNAc...) asparagine glycosylation is present at N1370. An ALS 29 repeat occupies 1373–1404 (VTTTEYWSQSYATTTTVTAPPGGTATVIIREP). N1406 carries an N-linked (GlcNAc...) asparagine glycan. One copy of the ALS 30 repeat lies at 1409-1440 (VTTTEYWSQSYATTTTITAPPGDTDTVIIREP). The N-linked (GlcNAc...) asparagine glycan is linked to N1442. 2 ALS repeats span residues 1445–1476 (VTTT…IREP) and 1481–1512 (VTTT…IREP). Residue N1514 is glycosylated (N-linked (GlcNAc...) asparagine). The ALS 33 repeat unit spans residues 1517-1548 (VTTTEYWSQSYATTTTVTAPPGGTATVIIREP). A glycan (N-linked (GlcNAc...) asparagine) is linked at N1550. An ALS 34 repeat occupies 1553 to 1584 (VTTTEYWSQSYATTTTITAPPGDTDTVIIREP). An N-linked (GlcNAc...) asparagine glycan is attached at N1586. One copy of the ALS 35 repeat lies at 1589 to 1620 (VTTTEYWSQSYATTTTVTAPPGGTDTVIIREP). N1622 is a glycosylation site (N-linked (GlcNAc...) asparagine). One copy of the ALS 36 repeat lies at 1625–1656 (VTTTEYWSQSYATTTTVTAPPGGTATVIIREP). N-linked (GlcNAc...) asparagine glycosylation is present at N1658. ALS repeat units follow at residues 1661–1692 (VTTT…IREP) and 1697–1728 (VTTT…IREP). N-linked (GlcNAc...) asparagine glycosylation occurs at N1730. The stretch at 1733–1764 (VTTTEYWSQSYATTTTVTAPPGGTDTVIIREP) is one ALS 39 repeat. An N-linked (GlcNAc...) asparagine glycan is attached at N1766. ALS repeat units follow at residues 1769-1800 (VTTT…IREP) and 1805-1836 (VTTT…IREP). N1838 carries N-linked (GlcNAc...) asparagine glycosylation. 2 ALS repeats span residues 1841–1872 (VTTT…IREP) and 1877–1907 (VTTT…RIRE). N1910 is a glycosylation site (N-linked (GlcNAc...) asparagine). ALS repeat units follow at residues 1913–1944 (VTTT…IREP) and 1949–1980 (VTTT…IREP). N1982 carries an N-linked (GlcNAc...) asparagine glycan. 3 ALS repeats span residues 1985 to 2016 (VTTT…IREP), 2021 to 2052 (VTTT…IREP), and 2057 to 2088 (VTTT…IREP). An N-linked (GlcNAc...) asparagine glycan is attached at N2090. 2 ALS repeats span residues 2093–2124 (VTTT…IREP) and 2129–2157 (VTTT…SVII). Residue N2197 is glycosylated (N-linked (GlcNAc...) asparagine). Disordered stretches follow at residues 2200–2235 (VTHL…GSEN) and 2274–2494 (TTII…QQTT). The segment covering 2204-2233 (PSSSSKPVDIPSSDVVTSTNDNSLTSLTGS) has biased composition (low complexity). N2281 carries an N-linked (GlcNAc...) asparagine glycan. Positions 2282–2296 (GSGKSKSGELSSTGS) are enriched in low complexity. Polar residues-rich tracts occupy residues 2329–2420 (STET…SATA) and 2429–2452 (NGAT…TTNI). N2444 and N2466 each carry an N-linked (GlcNAc...) asparagine glycan. Low complexity-rich tracts occupy residues 2453-2471 (QGGN…TGEP) and 2482-2494 (SISQ…QQTT). D2507 is lipidated: GPI-anchor amidated aspartate. Residues 2508–2530 (GSGSIVQHSGWLYVLLTAISIFF) constitute a propeptide, removed in mature form.

The protein belongs to the ALS family. N-glycosylated and O-glycosylated. Post-translationally, the GPI-anchor is attached to the protein in the endoplasmic reticulum and serves to target the protein to the cell surface. There, the glucosamine-inositol phospholipid moiety is cleaved off and the GPI-modified mannoprotein is covalently attached via its lipidless GPI glycan remnant to the 1,6-beta-glucan of the outer cell wall layer.

It is found in the cell membrane. It localises to the secreted. The protein localises to the cell wall. Its function is as follows. Cell surface adhesion protein which mediates both yeast-to-host tissue adherence and yeast aggregation. Plays an important role in the pathogenesis of C.albicans infections. This Candida albicans (strain SC5314 / ATCC MYA-2876) (Yeast) protein is Agglutinin-like protein 2 (ALS2).